Here is an 821-residue protein sequence, read N- to C-terminus: Kinetochore protein SLK19 (821 aa).

Disordered regions lie at residues 1-52 (MNEV…SQFV) and 99-153 (FDDK…NDKE). Threonine 7 is modified (phosphothreonine; by CDC28). A compositionally biased stretch (polar residues) spans 15–51 (QAQQREQNSENCSQERNPRTFNSEPDSSFNSPGSSQF). Basic and acidic residues-rich tracts occupy residues 99 to 122 (FDDK…DKHV) and 136 to 153 (SSEK…NDKE). Residues serine 188 and serine 189 each carry the phosphoserine modification. Serine 201 carries the post-translational modification Phosphoserine; by CDC28. Serine 216 is subject to Phosphoserine. Phosphothreonine is present on threonine 273. Disordered stretches follow at residues 274-298 (PLYE…DDNQ) and 699-720 (EQNN…RDDE). Serine 283 carries the post-translational modification Phosphoserine. Residues 310–821 (AKRNEELTDQ…LLKLLENEKK (512 aa)) adopt a coiled-coil conformation.

In terms of processing, cleaved by ESP1 at the onset of anaphase. Post-translationally, phosphorylated by CDC5/Polo-like kinase at the onset of anaphase. Phosphorylation takes places at proximity to cleavage sites and is required for an efficient cleavage by ESP1. Phosphorylated also by CDC28.

Its subcellular location is the chromosome. The protein localises to the centromere. The protein resides in the kinetochore. It localises to the cytoplasm. It is found in the cytoskeleton. Its subcellular location is the microtubule organizing center. The protein localises to the spindle pole body. Functionally, has a role in spindle assembly and stability. Required to ensure a timely exit form mitosis. Essential to maintain pre-anaphase spindle polarity. Associates to the plus ends of the microtubules at the kinetochore and spindle midzone. A component of the FEAR (CDC14 Early Anaphase Release) network which promotes CDC14 release from the nucleolus during early anaphase. Required for proper chromosome segregation during meiosis I where it prevents premature sister chromatid separation. The polypeptide is Kinetochore protein SLK19 (SLK19) (Saccharomyces cerevisiae (strain ATCC 204508 / S288c) (Baker's yeast)).